The primary structure comprises 1180 residues: IQ domain-containing protein N (1180 aa).

The interval 34–78 (HPPAPAHPSLLDKMEKAPPQPQHEGLKSKEHLPQQPAEGKTASRR) is disordered. The IQ 1 domain occupies 103–132 (HARAATLIQANWRGYWLRQKLISQMMAAKA). Disordered regions lie at residues 283-324 (RVSA…ETPK), 476-496 (MSKT…PQTR), and 786-820 (QRLG…TQGG). 5 consecutive IQ domains span residues 926-955 (RILA…GAMV), 956-978 (IQAT…ATTT), 979-1001 (IQSA…MLHP), 1113-1142 (QDKA…AAKI), and 1143-1165 (VQAT…LLGP).

As to quaternary structure, interacts with calmodulin.

Essential for spermiogenesis and fertilization. May be required for manchette assembly in elongating spermatids. The chain is IQ domain-containing protein N from Homo sapiens (Human).